Here is a 421-residue protein sequence, read N- to C-terminus: Truncated surface protein (421 aa).

The signal sequence occupies residues 1–31 (MRAKGTRKNYQHLWRWGTMLLGMLMICSAAE). Cysteine 53 and cysteine 73 form a disulfide bridge. N-linked (GlcNAc...) asparagine; by host glycosylation is found at asparagine 87, asparagine 97, asparagine 129, asparagine 135, asparagine 140, asparagine 151, asparagine 155, asparagine 183, asparagine 192, asparagine 229, asparagine 236, asparagine 257, asparagine 271, asparagine 284, asparagine 290, asparagine 296, asparagine 326, asparagine 333, asparagine 349, and asparagine 355. 5 cysteine pairs are disulfide-bonded: cysteine 118/cysteine 200, cysteine 125/cysteine 191, cysteine 130/cysteine 152, cysteine 213/cysteine 242, and cysteine 223/cysteine 234. Residues 130–151 (CTDLTNATYANGSSEERGEIRN) are V1. Residues 152-191 (CSFNVTTIIRNKIQKEYALFYRLDIVPIDKDNTSYTLINC) form a V2 region. Residues 291-324 (CTRPNNNTKKGIAIGPGRTLYAREKIIGDIRQAH) are V3. The cysteines at positions 291 and 325 are disulfide-linked. Residues 357-367 (SSGGDPEIVMH) form a CD4-binding loop region. A disulfide bond links cysteine 378 and cysteine 410. Residues 378-410 (CKTTQLFNSTWLFNSTWNDTERSDNNETIIIPC) form a V4 region. Asparagine 385, asparagine 391, asparagine 395, and asparagine 403 each carry an N-linked (GlcNAc...) asparagine; by host glycan.

The protein localises to the virion membrane. The polypeptide is Truncated surface protein (env) (Human immunodeficiency virus type 1 group M subtype B (isolate NY5) (HIV-1)).